Here is a 764-residue protein sequence, read N- to C-terminus: 5-methyltetrahydropteroyltriglutamate--homocysteine methyltransferase (764 aa).

5-methyltetrahydropteroyltri-L-glutamate contacts are provided by residues 16–19 and K121; that span reads RELK. L-homocysteine-binding positions include 440 to 442 and E493; that span reads IGS. L-methionine is bound by residues 440–442 and E493; that span reads IGS. 5-methyltetrahydropteroyltri-L-glutamate is bound by residues 524–525 and W570; that span reads RC. D608 contributes to the L-homocysteine binding site. D608 is an L-methionine binding site. A 5-methyltetrahydropteroyltri-L-glutamate-binding site is contributed by E614. Zn(2+) is bound by residues H650, C652, and E674. The Proton donor role is filled by H703. Residue C735 participates in Zn(2+) binding.

Belongs to the vitamin-B12 independent methionine synthase family. The cofactor is Zn(2+).

It carries out the reaction 5-methyltetrahydropteroyltri-L-glutamate + L-homocysteine = tetrahydropteroyltri-L-glutamate + L-methionine. Its pathway is amino-acid biosynthesis; L-methionine biosynthesis via de novo pathway; L-methionine from L-homocysteine (MetE route): step 1/1. Catalyzes the transfer of a methyl group from 5-methyltetrahydrofolate to homocysteine resulting in methionine formation. This is 5-methyltetrahydropteroyltriglutamate--homocysteine methyltransferase from Burkholderia cenocepacia (strain HI2424).